We begin with the raw amino-acid sequence, 1029 residues long: Carbamoyl phosphate synthase large chain (1029 aa).

A carboxyphosphate synthetic domain region spans residues 1 to 402; it reads MPKRTDLQTI…SLQKALRSTE (402 aa). ATP contacts are provided by arginine 129, arginine 169, glycine 175, glycine 176, glutamate 208, isoleucine 210, glutamate 215, glycine 241, valine 242, histidine 243, glutamine 285, and glutamate 299. Residues 133–328 form the ATP-grasp 1 domain; the sequence is QAAMKKIGVE…IAKIAALLAV (196 aa). Glutamine 285, glutamate 299, and asparagine 301 together coordinate Mg(2+). Mn(2+) contacts are provided by glutamine 285, glutamate 299, and asparagine 301. The tract at residues 403–544 is oligomerization domain; the sequence is SDIRGVYAEM…YHYSTYEWED (142 aa). Positions 545 to 929 are carbamoyl phosphate synthetic domain; sequence EVTGTDKPKV…AFYRAQLGAK (385 aa). Residues 671 to 863 form the ATP-grasp 2 domain; that stretch reads NALCERLGLS…LAKSAARIAV (193 aa). 10 residues coordinate ATP: arginine 707, glutamine 747, leucine 749, glutamate 754, glycine 779, valine 780, histidine 781, serine 782, glutamine 822, and glutamate 834. Residues glutamine 822, glutamate 834, and asparagine 836 each contribute to the Mg(2+) site. 3 residues coordinate Mn(2+): glutamine 822, glutamate 834, and asparagine 836. Positions 930–1028 constitute an MGS-like domain; it reads SYLPLSGTAL…QDWQTQEAVA (99 aa). The segment at 930 to 1029 is allosteric domain; that stretch reads SYLPLSGTAL…DWQTQEAVAG (100 aa).

The protein belongs to the CarB family. Composed of two chains; the small (or glutamine) chain promotes the hydrolysis of glutamine to ammonia, which is used by the large (or ammonia) chain to synthesize carbamoyl phosphate. Tetramer of heterodimers (alpha,beta)4. Requires Mg(2+) as cofactor. The cofactor is Mn(2+).

The catalysed reaction is hydrogencarbonate + L-glutamine + 2 ATP + H2O = carbamoyl phosphate + L-glutamate + 2 ADP + phosphate + 2 H(+). It catalyses the reaction hydrogencarbonate + NH4(+) + 2 ATP = carbamoyl phosphate + 2 ADP + phosphate + 2 H(+). Its pathway is amino-acid biosynthesis; L-arginine biosynthesis; carbamoyl phosphate from bicarbonate: step 1/1. It functions in the pathway pyrimidine metabolism; UMP biosynthesis via de novo pathway; (S)-dihydroorotate from bicarbonate: step 1/3. Large subunit of the glutamine-dependent carbamoyl phosphate synthetase (CPSase). CPSase catalyzes the formation of carbamoyl phosphate from the ammonia moiety of glutamine, carbonate, and phosphate donated by ATP, constituting the first step of 2 biosynthetic pathways, one leading to arginine and/or urea and the other to pyrimidine nucleotides. The large subunit (synthetase) binds the substrates ammonia (free or transferred from glutamine from the small subunit), hydrogencarbonate and ATP and carries out an ATP-coupled ligase reaction, activating hydrogencarbonate by forming carboxy phosphate which reacts with ammonia to form carbamoyl phosphate. The polypeptide is Carbamoyl phosphate synthase large chain (Deinococcus deserti (strain DSM 17065 / CIP 109153 / LMG 22923 / VCD115)).